The sequence spans 254 residues: 3-dehydroquinate dehydratase (254 aa).

Residues 47 to 49 (EWR) and arginine 83 each bind 3-dehydroquinate. The active-site Proton donor/acceptor is the histidine 144. Residue lysine 171 is the Schiff-base intermediate with substrate of the active site. 3-dehydroquinate-binding residues include arginine 214, serine 233, and glutamine 237.

This sequence belongs to the type-I 3-dehydroquinase family. As to quaternary structure, homodimer.

It carries out the reaction 3-dehydroquinate = 3-dehydroshikimate + H2O. Its pathway is metabolic intermediate biosynthesis; chorismate biosynthesis; chorismate from D-erythrose 4-phosphate and phosphoenolpyruvate: step 3/7. In terms of biological role, involved in the third step of the chorismate pathway, which leads to the biosynthesis of aromatic amino acids. Catalyzes the cis-dehydration of 3-dehydroquinate (DHQ) and introduces the first double bond of the aromatic ring to yield 3-dehydroshikimate. This Bacillus licheniformis (strain ATCC 14580 / DSM 13 / JCM 2505 / CCUG 7422 / NBRC 12200 / NCIMB 9375 / NCTC 10341 / NRRL NRS-1264 / Gibson 46) protein is 3-dehydroquinate dehydratase.